Reading from the N-terminus, the 582-residue chain is ATP-dependent lipid A-core flippase (582 aa).

5 helical membrane-spanning segments follow: residues 25 to 45 (AGLIVAAIALILNAASDTFML), 69 to 89 (LAVIGLMVVRGVTGFVSSYCI), 137 to 159 (ASSSSALVTVVREGASIIGLFIM), 253 to 273 (PIIQLIASFALALVLYAASFP), and 275 to 295 (VMETLTAGTITVVFSAMIALM). The region spanning 28 to 310 (IVAAIALILN…LTNVNTQFQR (283 aa)) is the ABC transmembrane type-1 domain. An ABC transporter domain is found at 342–578 (IEFRHVTFYY…QGVYAQLNRM (237 aa)). Residue 376-383 (GRSGSGKS) coordinates ATP.

The protein belongs to the ABC transporter superfamily. Lipid exporter (TC 3.A.1.106) family. As to quaternary structure, homodimer.

Its subcellular location is the cell inner membrane. It carries out the reaction ATP + H2O + lipid A-core oligosaccharideSide 1 = ADP + phosphate + lipid A-core oligosaccharideSide 2.. Involved in lipopolysaccharide (LPS) biosynthesis. Translocates lipid A-core from the inner to the outer leaflet of the inner membrane. Transmembrane domains (TMD) form a pore in the inner membrane and the ATP-binding domain (NBD) is responsible for energy generation. This is ATP-dependent lipid A-core flippase from Yersinia pestis bv. Antiqua (strain Antiqua).